We begin with the raw amino-acid sequence, 58 residues long: Large ribosomal subunit protein uL30 (58 aa).

The protein belongs to the universal ribosomal protein uL30 family. As to quaternary structure, part of the 50S ribosomal subunit.

This chain is Large ribosomal subunit protein uL30, found in Acinetobacter baylyi (strain ATCC 33305 / BD413 / ADP1).